The primary structure comprises 729 residues: Cellulose synthase catalytic subunit [UDP-forming] (729 aa).

The next 3 helical transmembrane spans lie at 30–50 (LATW…VAVP), 110–130 (FILG…LVLG), and 171–191 (TTVL…IHLL). A catalytic subdomain A region spans residues 151-244 (LWPSVDVFIP…YVAIFDCDHI (94 aa)). D193 is a catalytic residue. Positions 240 and 242 each coordinate substrate. Residues 321–381 (TALEEVGGVA…AQRIRWARGM (61 aa)) are catalytic subdomain B. D337 is a catalytic residue. A run of 5 helical transmembrane segments spans residues 405–425 (LNAM…TAPL), 427–447 (YLFF…AYAL), 520–540 (LFLL…LIYV), 549–569 (IWFN…TIAT), and 610–630 (MAIM…QIGL). One can recognise a PilZ domain in the interval 575 to 671 (QVRSAHRVPL…QERWLVASTF (97 aa)).

It belongs to the glycosyltransferase 2 family. It depends on Mg(2+) as a cofactor.

It is found in the cell inner membrane. It catalyses the reaction [(1-&gt;4)-beta-D-glucosyl](n) + UDP-alpha-D-glucose = [(1-&gt;4)-beta-D-glucosyl](n+1) + UDP + H(+). The protein operates within glycan metabolism; bacterial cellulose biosynthesis. Its activity is regulated as follows. Activated by bis-(3'-5') cyclic diguanylic acid (c-di-GMP). In terms of biological role, catalytic subunit of cellulose synthase. It polymerizes uridine 5'-diphosphate glucose to cellulose, which is produced as an extracellular component for mechanical and chemical protection. This is Cellulose synthase catalytic subunit [UDP-forming] (bcsA) from Xanthomonas axonopodis pv. citri (strain 306).